Consider the following 208-residue polypeptide: Small ribosomal subunit protein uS4A (208 aa).

The region spanning 98 to 159 is the S4 RNA-binding domain; that stretch reads SRLDNVAYNM…HAKSYLRIKA (62 aa).

The protein belongs to the universal ribosomal protein uS4 family. In terms of assembly, part of the 30S ribosomal subunit. Contacts protein S5. The interaction surface between S4 and S5 is involved in control of translational fidelity.

In terms of biological role, one of the primary rRNA binding proteins, it binds directly to 16S rRNA where it nucleates assembly of the body of the 30S subunit. Functionally, with S5 and S12 plays an important role in translational accuracy. The protein is Small ribosomal subunit protein uS4A (rpsD1) of Nitrosomonas europaea (strain ATCC 19718 / CIP 103999 / KCTC 2705 / NBRC 14298).